Reading from the N-terminus, the 139-residue chain is MAQVKSLAQSLYPCSSQRLEHQMKLQILKNSSVTCNDGTPAGYYIKESRGSRRWLVFLEGGWYCFSKHTCDSRYESMRRLMSSSNWPPTRTGTGILSPQPEENPHWWNANTVFVPYCSSDVWSGSTPKTDQRGHQGALN.

Belongs to the pectinacetylesterase family. Notum subfamily.

Its function is as follows. Probable inactive palmitoleoyl-protein carboxylesterase. In Danio rerio (Zebrafish), this protein is Inactive palmitoleoyl-protein carboxylesterase notum1b.